The chain runs to 182 residues: Crossover junction endodeoxyribonuclease RuvC (182 aa).

Catalysis depends on residues aspartate 7, glutamate 69, and aspartate 141. Mg(2+) contacts are provided by aspartate 7, glutamate 69, and aspartate 141.

This sequence belongs to the RuvC family. In terms of assembly, homodimer which binds Holliday junction (HJ) DNA. The HJ becomes 2-fold symmetrical on binding to RuvC with unstacked arms; it has a different conformation from HJ DNA in complex with RuvA. In the full resolvosome a probable DNA-RuvA(4)-RuvB(12)-RuvC(2) complex forms which resolves the HJ. Mg(2+) serves as cofactor.

The protein localises to the cytoplasm. It catalyses the reaction Endonucleolytic cleavage at a junction such as a reciprocal single-stranded crossover between two homologous DNA duplexes (Holliday junction).. Its function is as follows. The RuvA-RuvB-RuvC complex processes Holliday junction (HJ) DNA during genetic recombination and DNA repair. Endonuclease that resolves HJ intermediates. Cleaves cruciform DNA by making single-stranded nicks across the HJ at symmetrical positions within the homologous arms, yielding a 5'-phosphate and a 3'-hydroxyl group; requires a central core of homology in the junction. The consensus cleavage sequence is 5'-(A/T)TT(C/G)-3'. Cleavage occurs on the 3'-side of the TT dinucleotide at the point of strand exchange. HJ branch migration catalyzed by RuvA-RuvB allows RuvC to scan DNA until it finds its consensus sequence, where it cleaves and resolves the cruciform DNA. This Albidiferax ferrireducens (strain ATCC BAA-621 / DSM 15236 / T118) (Rhodoferax ferrireducens) protein is Crossover junction endodeoxyribonuclease RuvC.